Here is a 112-residue protein sequence, read N- to C-terminus: UPF0342 protein SGO_1370 (112 aa).

This sequence belongs to the UPF0342 family.

This is UPF0342 protein SGO_1370 from Streptococcus gordonii (strain Challis / ATCC 35105 / BCRC 15272 / CH1 / DL1 / V288).